We begin with the raw amino-acid sequence, 255 residues long: Uridylate kinase (255 aa).

22 to 25 is a binding site for ATP; the sequence is KLSG. The tract at residues 30 to 35 is involved in allosteric activation by GTP; it reads GNGGYG. G64 provides a ligand contact to UMP. Positions 65 and 69 each coordinate ATP. UMP is bound by residues D85 and 146–153; that span reads TGNPFFTT. 3 residues coordinate ATP: N174, Y180, and D183.

It belongs to the UMP kinase family. In terms of assembly, homohexamer.

It localises to the cytoplasm. It catalyses the reaction UMP + ATP = UDP + ADP. It functions in the pathway pyrimidine metabolism; CTP biosynthesis via de novo pathway; UDP from UMP (UMPK route): step 1/1. Its activity is regulated as follows. Allosterically activated by GTP. Inhibited by UTP. In terms of biological role, catalyzes the reversible phosphorylation of UMP to UDP. The polypeptide is Uridylate kinase (Rubrobacter xylanophilus (strain DSM 9941 / JCM 11954 / NBRC 16129 / PRD-1)).